Consider the following 425-residue polypeptide: Dual-specificity RNA methyltransferase RlmN (425 aa).

The Proton acceptor role is filled by E136. One can recognise a Radical SAM core domain in the interval 142–381 (GDDRGTLCVS…FTAGYASPVR (240 aa)). A disulfide bond links C149 and C392. Residues C156, C160, and C163 each contribute to the [4Fe-4S] cluster site. S-adenosyl-L-methionine is bound by residues 218-219 (GE), S250, 272-274 (SLH), and N349. C392 acts as the S-methylcysteine intermediate in catalysis.

This sequence belongs to the radical SAM superfamily. RlmN family. [4Fe-4S] cluster is required as a cofactor.

It is found in the cytoplasm. The catalysed reaction is adenosine(2503) in 23S rRNA + 2 reduced [2Fe-2S]-[ferredoxin] + 2 S-adenosyl-L-methionine = 2-methyladenosine(2503) in 23S rRNA + 5'-deoxyadenosine + L-methionine + 2 oxidized [2Fe-2S]-[ferredoxin] + S-adenosyl-L-homocysteine. It carries out the reaction adenosine(37) in tRNA + 2 reduced [2Fe-2S]-[ferredoxin] + 2 S-adenosyl-L-methionine = 2-methyladenosine(37) in tRNA + 5'-deoxyadenosine + L-methionine + 2 oxidized [2Fe-2S]-[ferredoxin] + S-adenosyl-L-homocysteine. Specifically methylates position 2 of adenine 2503 in 23S rRNA and position 2 of adenine 37 in tRNAs. m2A2503 modification seems to play a crucial role in the proofreading step occurring at the peptidyl transferase center and thus would serve to optimize ribosomal fidelity. The sequence is that of Dual-specificity RNA methyltransferase RlmN from Methylorubrum extorquens (strain PA1) (Methylobacterium extorquens).